The primary structure comprises 205 residues: Probable thymidylate kinase (205 aa).

Position 10–17 (10–17) interacts with ATP; sequence GIDGSGKT.

It belongs to the thymidylate kinase family.

The enzyme catalyses dTMP + ATP = dTDP + ADP. The chain is Probable thymidylate kinase (tmk) from Pyrococcus horikoshii (strain ATCC 700860 / DSM 12428 / JCM 9974 / NBRC 100139 / OT-3).